The primary structure comprises 206 residues: Small ribosomal subunit protein uS4 (206 aa).

The S4 RNA-binding domain occupies 96-156 (GRLDNVVYRM…EKAKKQSRVK (61 aa)).

It belongs to the universal ribosomal protein uS4 family. Part of the 30S ribosomal subunit. Contacts protein S5. The interaction surface between S4 and S5 is involved in control of translational fidelity.

One of the primary rRNA binding proteins, it binds directly to 16S rRNA where it nucleates assembly of the body of the 30S subunit. Its function is as follows. With S5 and S12 plays an important role in translational accuracy. This is Small ribosomal subunit protein uS4 from Klebsiella pneumoniae (strain 342).